Consider the following 154-residue polypeptide: Endoribonuclease YbeY (154 aa).

Zn(2+)-binding residues include His113, His117, and His123.

It belongs to the endoribonuclease YbeY family. Zn(2+) is required as a cofactor.

Its subcellular location is the cytoplasm. Single strand-specific metallo-endoribonuclease involved in late-stage 70S ribosome quality control and in maturation of the 3' terminus of the 16S rRNA. This is Endoribonuclease YbeY from Anaplasma marginale (strain Florida).